The primary structure comprises 498 residues: NAD(P)H-quinone oxidoreductase chain 4, chloroplastic (498 aa).

14 helical membrane passes run Leu4–Leu24, Leu37–Leu57, Met87–Val107, Val111–Ser131, Ile134–Met154, Phe167–Leu187, Ile207–Ile227, His242–Ile262, Phe274–Ile294, Ile305–Asp325, Ala331–Ile351, Leu386–Thr406, Ile417–Leu437, and Ile461–Val481.

Belongs to the complex I subunit 4 family.

The protein resides in the plastid. Its subcellular location is the chloroplast thylakoid membrane. The enzyme catalyses a plastoquinone + NADH + (n+1) H(+)(in) = a plastoquinol + NAD(+) + n H(+)(out). It catalyses the reaction a plastoquinone + NADPH + (n+1) H(+)(in) = a plastoquinol + NADP(+) + n H(+)(out). The sequence is that of NAD(P)H-quinone oxidoreductase chain 4, chloroplastic from Psilotum nudum (Whisk fern).